The following is a 1734-amino-acid chain: Complement C4-A (1734 aa).

Positions 1 to 19 (MRLLWGLAWVFSFCASSLQ) are cleaved as a signal peptide. Cysteines 66 and 95 form a disulfide. A glycan (N-linked (GlcNAc...) asparagine) is linked at Asn-224. Cys-633 and Cys-667 are oxidised to a cystine. Positions 674-677 (RQKR) are excised as a propeptide. Intrachain disulfides connect Cys-700/Cys-726, Cys-701/Cys-733, and Cys-714/Cys-734. Residues 700-734 (CCQDGMTKLPMKRTCEQRAARVPQQACREPFLSCC) form the Anaphylatoxin-like domain. Asn-743 and Asn-859 each carry an N-linked (GlcNAc...) asparagine glycan. Residues 1002 to 1005 (CAEQ) constitute a cross-link (isoglutamyl cysteine thioester (Cys-Gln)). Asn-1128 and Asn-1383 each carry an N-linked (GlcNAc...) asparagine glycan. Tyr-1409 bears the Sulfotyrosine mark. The propeptide occupies 1437 to 1443 (RRSRRRR). 5 disulfides stabilise this stretch: Cys-1461-Cys-1525, Cys-1573-Cys-1578, Cys-1585-Cys-1663, Cys-1608-Cys-1732, and Cys-1708-Cys-1717. An NTR domain is found at 1585-1732 (CPRLLRSLER…FLMEFSSRGC (148 aa)).

As to quaternary structure, in absence of complement activation, circulates in blood as a disulfide-linked trimer of an alpha, beta and gamma chain. Complement C4b is composed of Complement C4b-A, Complement C4 beta and Complement C4 gamma chains that are associated via disulfide bonds. Non-enzymatic component of the C3 convertase, also named C4bC2b, composed of the serine protease complement C2b (C2), as well as complement C4b. Non-enzymatic component of the C5 convertase, also named C4bC2bC3b, composed of the serine protease complement C2b (C2), complement C3b, as well as complement C4b. In terms of processing, prior to secretion, the single-chain precursor is enzymatically cleaved by plasminogen (PLG) to yield non-identical chains alpha, beta and gamma. During activation of the complement systems, the alpha chain is cleaved into C4a and C4b by different proteases depending on the complement pathway: C4b stays linked to the beta and gamma chains, while C4a is released in the plasma. The alpha chain is cleaved by C1S to generate C4a and C4b following activation by the classical complement system. The alpha chain is cleaved to generate C4a and C4b by MASP2 following activation by the lectin complement system. The alpha chain is cleaved by GZMK to generate C4a and C4b following activation by the GZMK complement system. Further degradation of C4b by C1 into the inactive fragments C4c and C4d blocks the generation of C3 convertase. The proteolytic cleavages often are incomplete so that many structural forms can be found in plasma. Upon activation, the internal thioester bond reacts with carbohydrate antigens on the target surface to form amide or ester bonds, leading to covalent association with the surface of pathogens. Post-translationally, complement C4b interacts with complement C3b via a thioester linkage. In terms of processing, N- and O-glycosylated. O-glycosylated with a core 1 or possibly core 8 glycan.

Its subcellular location is the secreted. It localises to the synapse. The protein resides in the cell projection. It is found in the axon. The protein localises to the dendrite. Its subcellular location is the cell surface. Its activity is regulated as follows. Specifically inhibited by nanobody hC4Nb8, inhibiting the classical complement pathway. In terms of biological role, precursor of non-enzymatic components of the classical, lectin and GZMK complement pathways, which consist in a cascade of proteins that leads to phagocytosis and breakdown of pathogens and signaling that strengthens the adaptive immune system. Its function is as follows. Non-enzymatic component of C3 and C5 convertases. Generated following cleavage by complement proteases (C1S, MASP2 or GZMK, depending on the complement pathway), it covalently attaches to the surface of pathogens, where it acts as an opsonin that marks the surface of antigens for removal. It then recruits the serine protease complement C2b to form the C3 and C5 convertases, which cleave and activate C3 and C5, respectively, the next components of the complement pathways. Complement C4b-A isotype is responsible for effective binding to form amide bonds with immune aggregates or protein antigens, while complement C4b-B isotype catalyzes the transacylation of the thioester carbonyl group to form ester bonds with carbohydrate antigens. Putative humoral mediator released following cleavage by complement proteases (C1S, MASP2 or GZMK, depending on the complement pathway). While it is strongly similar to anaphylatoxins, its role is unclear. Was reported to act as a mediator of local inflammatory process; however these effects were probably due to contamination with C3a and/C5a anaphylatoxins in biological assays. The polypeptide is Complement C4-A (Mus musculus (Mouse)).